A 679-amino-acid polypeptide reads, in one-letter code: Glycine--tRNA ligase beta subunit (679 aa).

It belongs to the class-II aminoacyl-tRNA synthetase family. In terms of assembly, tetramer of two alpha and two beta subunits.

Its subcellular location is the cytoplasm. The catalysed reaction is tRNA(Gly) + glycine + ATP = glycyl-tRNA(Gly) + AMP + diphosphate. This Streptococcus pyogenes serotype M6 (strain ATCC BAA-946 / MGAS10394) protein is Glycine--tRNA ligase beta subunit.